The following is a 305-amino-acid chain: Coiled-coil domain-containing protein 83 (305 aa).

Residues M1–S25 form a disordered region. Over residues S8–K21 the composition is skewed to basic and acidic residues. A coiled-coil region spans residues E37–R186.

The polypeptide is Coiled-coil domain-containing protein 83 (Ccdc83) (Mus musculus (Mouse)).